Reading from the N-terminus, the 137-residue chain is Gonadotropin subunit beta-1 (137 aa).

The first 24 residues, 1–24 (MYCTHLMTLQLVVMAMLWVTPVRA), serve as a signal peptide directing secretion. Cystine bridges form between Cys-32–Cys-78, Cys-46–Cys-93, Cys-55–Cys-108, Cys-59–Cys-110, and Cys-113–Cys-120. Asn-36 carries N-linked (GlcNAc...) asparagine glycosylation.

This sequence belongs to the glycoprotein hormones subunit beta family. Heterodimer of an alpha and a beta chain.

It localises to the secreted. Involved in gametogenesis and steroidogenesis. This chain is Gonadotropin subunit beta-1 (cgba), found in Oncorhynchus keta (Chum salmon).